A 258-amino-acid polypeptide reads, in one-letter code: MASPREENVYMAKLAEQAERYEEMVEFMEKVVAAADGAEELTVEERNLLSVAYKNVIGARRASWRIISSIEQKEESRGNEDHVASIKEYRSKIESELTSICNGILKLLDSKLIGSAATGDSKVFYLKMKGDYHRYLAEFKTGAERKEAAENTLSAYKAAQDIANAELAPTHPIRLGLALNFSVFYYEILNSPDRACNLAKQAFDEAIAELDTLGEESYKDSTLIMQLLRDNLTLWTSDMQDDGTDEIKEATPKPDDNE.

Positions 238 to 258 (DMQDDGTDEIKEATPKPDDNE) are disordered. Over residues 245 to 258 (DEIKEATPKPDDNE) the composition is skewed to basic and acidic residues.

It belongs to the 14-3-3 family. As to quaternary structure, homodimer.

This chain is 14-3-3 protein 6 (TFT6), found in Solanum lycopersicum (Tomato).